A 21-amino-acid polypeptide reads, in one-letter code: Cupiennin-6a (21 aa).

Serine 21 carries the serine amide modification.

In terms of tissue distribution, expressed by the venom gland.

It localises to the secreted. In Cupiennius salei (American wandering spider), this protein is Cupiennin-6a.